The following is a 591-amino-acid chain: V-type ATP synthase alpha chain (591 aa).

233 to 240 (GPFGAGKT) lines the ATP pocket.

Belongs to the ATPase alpha/beta chains family.

The enzyme catalyses ATP + H2O + 4 H(+)(in) = ADP + phosphate + 5 H(+)(out). In terms of biological role, produces ATP from ADP in the presence of a proton gradient across the membrane. The V-type alpha chain is a catalytic subunit. In Streptococcus pyogenes serotype M3 (strain ATCC BAA-595 / MGAS315), this protein is V-type ATP synthase alpha chain.